The following is a 260-amino-acid chain: Methylthioribulose-1-phosphate dehydratase (260 aa).

The tract at residues 1-26 (MTPPTTGLPAENTTDDNDHLVQSDDP) is disordered. Residues 16-26 (DNDHLVQSDDP) show a composition bias toward basic and acidic residues. A substrate-binding site is contributed by Cys-109. Zn(2+) is bound by residues His-127 and His-129. The Proton donor/acceptor role is filled by Glu-154. His-211 contributes to the Zn(2+) binding site.

This sequence belongs to the aldolase class II family. MtnB subfamily. The cofactor is Zn(2+).

It localises to the cytoplasm. It carries out the reaction 5-(methylsulfanyl)-D-ribulose 1-phosphate = 5-methylsulfanyl-2,3-dioxopentyl phosphate + H2O. The protein operates within amino-acid biosynthesis; L-methionine biosynthesis via salvage pathway; L-methionine from S-methyl-5-thio-alpha-D-ribose 1-phosphate: step 2/6. Catalyzes the dehydration of methylthioribulose-1-phosphate (MTRu-1-P) into 2,3-diketo-5-methylthiopentyl-1-phosphate (DK-MTP-1-P). The sequence is that of Methylthioribulose-1-phosphate dehydratase from Podospora anserina (strain S / ATCC MYA-4624 / DSM 980 / FGSC 10383) (Pleurage anserina).